The following is a 192-amino-acid chain: uncharacterized protein (192 aa).

Residues 72–192 enclose the B12-binding domain; sequence GATVLLIVPP…SLVISEFSLV (121 aa).

This is an uncharacterized protein from Rhodobacter capsulatus (Rhodopseudomonas capsulata).